The following is a 144-amino-acid chain: Nucleoside diphosphate kinase (144 aa).

The ATP site is built by lysine 11, phenylalanine 59, arginine 87, threonine 93, arginine 104, and asparagine 114. Catalysis depends on histidine 117, which acts as the Pros-phosphohistidine intermediate.

It belongs to the NDK family. Homotetramer. Requires Mg(2+) as cofactor.

It localises to the cytoplasm. It carries out the reaction a 2'-deoxyribonucleoside 5'-diphosphate + ATP = a 2'-deoxyribonucleoside 5'-triphosphate + ADP. It catalyses the reaction a ribonucleoside 5'-diphosphate + ATP = a ribonucleoside 5'-triphosphate + ADP. Functionally, major role in the synthesis of nucleoside triphosphates other than ATP. The ATP gamma phosphate is transferred to the NDP beta phosphate via a ping-pong mechanism, using a phosphorylated active-site intermediate. The chain is Nucleoside diphosphate kinase from Aliivibrio fischeri (strain MJ11) (Vibrio fischeri).